A 187-amino-acid polypeptide reads, in one-letter code: LSM complex subunit LSM4 (187 aa).

In terms of domain architecture, Sm spans 2–85; the sequence is LPLYLLTNAK…IKFIKLQDNI (84 aa). Positions 93–187 are disordered; the sequence is INSNNNSNSN…NSSSPQKVEF (95 aa). Over residues 112-167 the composition is skewed to low complexity; sequence NRDSNNNRGNYNRRNNNNGNSNRRPYSQNRQYNNSNSSNINNSINSINSNNQNMNN. Position 119 is an omega-N-methylarginine (arginine 119). Over residues 175-187 the composition is skewed to polar residues; sequence HHFNSSSPQKVEF. Serine 181 bears the Phosphoserine mark.

This sequence belongs to the snRNP Sm proteins family. Component of the heptameric LSM1-LSM7 complex that forms a seven-membered ring structure with a donut shape. The LSm subunits are arranged in the order LSM1, LSM2, LSM3, LSM6, LSM5, LSM7 and LSM4. Except for LSM1, where a C-terminal helix crosses the ring structure to form additional interactions with LSM3 and LSM6, each subunit interacts only with its two neighboring subunits. The LSM1-LSM7 complex interacts with PAT1; within the complex PAT1 has direct interactions with LSM2 and LSM3. The LSM1-LSM7 complex interacts with XRN1. Component of the heptameric LSM2-LSM8 complex that forms a seven-membered ring structure with a donut shape; an RNA strand can pass through the hole in the center of the ring structure. The LSm subunits are arranged in the order LSM8, LSM2, LSM3, LSM6, LSM5, LSM7 and LSM4. Component of the spliceosome U4/U6-U5 tri-snRNP complex composed of the U4, U6 and U5 snRNAs and at least PRP3, PRP4, PRP6, PRP8, PRP18, PRP31, PRP38, SNU13, SNU23, SNU66, SNU114, SPP381, SMB1, SMD1, SMD2, SMD3, SMX2, SMX3, LSM2, LSM3, LSM4, LSM5, LSM6, LSM7, LSM8, BRR2 and DIB1. May be found in a complex comprising LSM2-LSM7 without LSM1 or LSM8; the complex associates with pre-P RNA and snoRNA SNR5.

It localises to the nucleus. The protein resides in the cytoplasm. Component of LSm protein complexes, which are involved in RNA processing and may function in a chaperone-like manner. Component of the cytoplasmic LSM1-LSM7 complex which is involved in mRNA degradation by activating the decapping step. Together with PAT1, the LSM1-LSM7 complex binds to osmotic stress-activated mRNAs to attenuate the osmotic stress response, probably by limiting ribosome access to the mRNA and consequently translation. Component of the nuclear LSM2-LSM8 complex, which is involved in spliceosome assembly. The LSM2-LSM8 complex plays a role in the biogenesis of the spliceosomal U4/U6-U5 tri-snRNP complex by accelerating PRP24-mediated annealing of U4/U6 di-snRNA. The LSM2-LSM8 complex binds U6 snRNA terminating with a non-cyclic 3' phosphate group. LSM2-LSM8 is probably also involved in degradation of nuclear pre-mRNA by targeting them for decapping. LSM2-LSM8 could be involved in processing of pre-tRNAs, pre-rRNAs and U3 snoRNA, although involvement may be indirect. In a complex that probably contains LSM2-LSM7, but not LSM1 or LSM8, associates with the precursor of the RNA component of RNase P (pre-P RNA) and may be involved in maturing pre-P RNA; the complex also associates with snoRNA SNR5. The sequence is that of LSM complex subunit LSM4 from Saccharomyces cerevisiae (strain ATCC 204508 / S288c) (Baker's yeast).